The primary structure comprises 516 residues: AMP phosphorylase (516 aa).

AMP contacts are provided by residues G169, 195 to 200 (SRAITG), and T204. D257 serves as the catalytic Proton donor. Residues S265 and K289 each contribute to the AMP site.

Belongs to the thymidine/pyrimidine-nucleoside phosphorylase family. Type 2 subfamily.

It catalyses the reaction AMP + phosphate = alpha-D-ribose 1,5-bisphosphate + adenine. The enzyme catalyses CMP + phosphate = cytosine + alpha-D-ribose 1,5-bisphosphate. The catalysed reaction is UMP + phosphate = alpha-D-ribose 1,5-bisphosphate + uracil. Its function is as follows. Catalyzes the conversion of AMP and phosphate to adenine and ribose 1,5-bisphosphate (R15P). Exhibits phosphorylase activity toward CMP and UMP in addition to AMP. Functions in an archaeal AMP degradation pathway, together with R15P isomerase and RubisCO. This Methanospirillum hungatei JF-1 (strain ATCC 27890 / DSM 864 / NBRC 100397 / JF-1) protein is AMP phosphorylase.